Reading from the N-terminus, the 564-residue chain is Proline--tRNA ligase (564 aa).

Belongs to the class-II aminoacyl-tRNA synthetase family. ProS type 1 subfamily. In terms of assembly, homodimer.

The protein resides in the cytoplasm. The catalysed reaction is tRNA(Pro) + L-proline + ATP = L-prolyl-tRNA(Pro) + AMP + diphosphate. Functionally, catalyzes the attachment of proline to tRNA(Pro) in a two-step reaction: proline is first activated by ATP to form Pro-AMP and then transferred to the acceptor end of tRNA(Pro). As ProRS can inadvertently accommodate and process non-cognate amino acids such as alanine and cysteine, to avoid such errors it has two additional distinct editing activities against alanine. One activity is designated as 'pretransfer' editing and involves the tRNA(Pro)-independent hydrolysis of activated Ala-AMP. The other activity is designated 'posttransfer' editing and involves deacylation of mischarged Ala-tRNA(Pro). The misacylated Cys-tRNA(Pro) is not edited by ProRS. The sequence is that of Proline--tRNA ligase from Thermosipho melanesiensis (strain DSM 12029 / CIP 104789 / BI429).